The sequence spans 513 residues: Putative ribose/galactose/methyl galactoside import ATP-binding protein (513 aa).

ABC transporter domains are found at residues 24-260 and 270-510; these read LSAE…VGRE and VPIG…VMEL. An ATP-binding site is contributed by 56-63; the sequence is GENGAGKS.

It belongs to the ABC transporter superfamily. Carbohydrate importer 2 (CUT2) (TC 3.A.1.2) family.

It is found in the cell inner membrane. It catalyses the reaction D-ribose(out) + ATP + H2O = D-ribose(in) + ADP + phosphate + H(+). The catalysed reaction is D-galactose(out) + ATP + H2O = D-galactose(in) + ADP + phosphate + H(+). Part of an ABC transporter complex involved in carbohydrate import. Could be involved in ribose, galactose and/or methyl galactoside import. Responsible for energy coupling to the transport system. The chain is Putative ribose/galactose/methyl galactoside import ATP-binding protein from Rhizobium johnstonii (strain DSM 114642 / LMG 32736 / 3841) (Rhizobium leguminosarum bv. viciae).